The chain runs to 518 residues: Probable cytochrome P450 9h1 (518 aa).

C462 contacts heme.

Belongs to the cytochrome P450 family. Heme serves as cofactor.

It is found in the endoplasmic reticulum membrane. The protein resides in the microsome membrane. In terms of biological role, may be involved in the metabolism of insect hormones and in the breakdown of synthetic insecticides. The protein is Probable cytochrome P450 9h1 (Cyp9h1) of Drosophila melanogaster (Fruit fly).